The primary structure comprises 311 residues: L-lactate dehydrogenase 2 (311 aa).

3 residues coordinate NAD(+): Val-14, Asp-35, and Arg-40. Position 90 (Arg-90) interacts with substrate. Residues Ser-103, 120-122, and Thr-145 each bind NAD(+); that span reads ATN. Residue 122-125 participates in substrate binding; it reads NPCD. Position 150-153 (150-153) interacts with substrate; sequence DTTR. Residue His-177 is the Proton acceptor of the active site. Residue Thr-230 participates in substrate binding.

The protein belongs to the LDH/MDH superfamily. LDH family. Homotetramer.

It localises to the cytoplasm. The catalysed reaction is (S)-lactate + NAD(+) = pyruvate + NADH + H(+). The protein operates within fermentation; pyruvate fermentation to lactate; (S)-lactate from pyruvate: step 1/1. Functionally, catalyzes the conversion of lactate to pyruvate. The protein is L-lactate dehydrogenase 2 of Listeria monocytogenes serotype 4b (strain F2365).